Reading from the N-terminus, the 299-residue chain is Regucalcin (299 aa).

Residue glutamate 18 coordinates a divalent metal cation. The substrate site is built by arginine 101, asparagine 103, and glutamate 121. At lysine 144 the chain carries N6-succinyllysine. A divalent metal cation is bound by residues asparagine 154 and aspartate 204. The Proton donor/acceptor role is filled by aspartate 204. Residues lysine 244 and lysine 253 each carry the N6-succinyllysine modification. Serine 268 carries the phosphoserine modification.

It belongs to the SMP-30/CGR1 family. As to quaternary structure, monomer. It depends on Zn(2+) as a cofactor. Mn(2+) is required as a cofactor. Requires Ca(2+) as cofactor. The cofactor is Mg(2+). Co(2+) serves as cofactor. The N-terminus is blocked. In terms of tissue distribution, detected in liver (at protein level). Hepatocytes and renal proximal tubular epithelium.

The protein localises to the cytoplasm. The enzyme catalyses D-glucono-1,5-lactone + H2O = D-gluconate + H(+). Its pathway is cofactor biosynthesis; L-ascorbate biosynthesis via UDP-alpha-D-glucuronate pathway; L-ascorbate from UDP-alpha-D-glucuronate: step 3/4. Gluconolactonase with low activity towards other sugar lactones, including gulonolactone and galactonolactone. Catalyzes a key step in ascorbic acid (vitamin C) biosynthesis. Can also hydrolyze diisopropyl phosphorofluoridate and phenylacetate (in vitro). Calcium-binding protein. Modulates Ca(2+) signaling, and Ca(2+)-dependent cellular processes and enzyme activities. In Rattus norvegicus (Rat), this protein is Regucalcin (Rgn).